A 2036-amino-acid chain; its full sequence is Putative mediator of RNA polymerase II transcription subunit 24 (2036 aa).

Disordered regions lie at residues 51–70, 159–184, 212–451, 501–580, 754–840, 928–1124, 1375–1419, and 1565–1608; these read NNNNSNNNNNNNNNNNNNNV, DNIENSNNNNNNNNNNNNNNSNNNIG, SPSP…QTTT, KSVN…NNNN, NLKN…SHQK, NNNN…NKDL, NNKN…NNNN, and NSSA…NGDT. A compositionally biased stretch (low complexity) spans 212–229; sequence SPSPSSSSSSSTSPSSQQ. Residues 260–270 show a composition bias toward basic and acidic residues; that stretch reads EIMKVKEEPIK. Composition is skewed to low complexity over residues 273–291, 300–311, 387–451, 501–539, 547–580, and 754–770; these read TTTTTTSTTTTTSTTSTTT, TNGNGEETTITT, QPQP…QTTT, KSVNNNNNNNNNNNNNNNNNNNNNYNNNNNDSMDQNSNN, NNNNINNNNNNNNNNNNNNNNNNNNNNNNNNNNN, and NLKNNKNNNNNNNNSNG. The stretch at 505-584 forms a coiled coil; sequence NNNNNNNNNN…NNNNNNINNI (80 aa). Over residues 778–787 the composition is skewed to polar residues; the sequence is GSSTDGSNKL. Low complexity-rich tracts occupy residues 788-808 and 928-943; these read SSTNIEEGNNNNNSSTHLNGN and NNNNNTNTNNINNNKN. Positions 943–977 form a coiled coil; that stretch reads NKNSKKSNNKNKNNKNNNKKNKNNNNNNNNNNNNN. The span at 944–964 shows a compositional bias: basic residues; it reads KNSKKSNNKNKNNKNNNKKNK. Composition is skewed to low complexity over residues 965–999, 1017–1118, 1385–1419, 1565–1584, and 1594–1608; these read NNNNNNNNNNNNNNNNNNNNNNNNNNNNNNNNNNN, NNNN…NNNN, SNNSSNNSINNINNNNNNNNNNNNNNNNNNNNNNN, NSSAYSTTTTTSASTSLPKS, and SSNTSTTTTKNNGDT. Residues 1915–1968 are a coiled coil; sequence SKNQSLKKKQKLKQKKQQHNNNNGGEYNIDQDHIEQIQQQQQQYQKQQQQRKDE.

The protein belongs to the Mediator complex subunit 24 family. As to quaternary structure, component of the Mediator complex.

The protein resides in the nucleus. Component of the Mediator complex, a coactivator involved in the regulated transcription of nearly all RNA polymerase II-dependent genes. Mediator functions as a bridge to convey information from gene-specific regulatory proteins to the basal RNA polymerase II transcription machinery. Mediator is recruited to promoters by direct interactions with regulatory proteins and serves as a scaffold for the assembly of a functional preinitiation complex with RNA polymerase II and the general transcription factors. The chain is Putative mediator of RNA polymerase II transcription subunit 24 (med24) from Dictyostelium discoideum (Social amoeba).